We begin with the raw amino-acid sequence, 416 residues long: D-amino acid dehydrogenase 2 (416 aa).

Residue 3-17 participates in FAD binding; sequence ITVLGAGVVGTAAAY.

The protein belongs to the DadA oxidoreductase family. FAD serves as cofactor.

The enzyme catalyses a D-alpha-amino acid + A + H2O = a 2-oxocarboxylate + AH2 + NH4(+). Its function is as follows. Oxidative deamination of D-amino acids. The sequence is that of D-amino acid dehydrogenase 2 (dadA2) from Mesorhizobium japonicum (strain LMG 29417 / CECT 9101 / MAFF 303099) (Mesorhizobium loti (strain MAFF 303099)).